The following is a 659-amino-acid chain: MNRFIMANSQQCLGCHACEIACVMAHNDEQHVLSQHHFHPRITVIKHQQQRSAVTCHHCEDAPCARSCPNGAISHVDDSIQVNQQKCIGCKSCVVACPFGTMQIVLTPVAAGKVKATAHKCDLCAGRENGPACVENCPADALQLVTDVALSGMAKSRRLRTARQEHQPWHASTAAQEMPVMSKVEQMQATPARGEPDKLAIEARKTGFDEIYLPFRADQAQREASRCLKCGEHSVCEWTCPLHNHIPQWIELVKAGNIDAAVELSHQTNTLPEITGRVCPQDRLCEGACTIRDEHGAVTIGNIERYISDQALAKGWRPDLSHVTKVDKRVAIIGAGPAGLACADVLTRNGVGVTVYDRHPEIGGLLTFGIPSFKLDKSLLARRREIFSAMGIHFELNCEVGKDVSLDSLLEQYDAVFVGVGTYRSMKAGLPNEDAPGVYDALPFLIANTKQVMGLEELPEEPFINTAGLNVVVLGGGDTAMDCVRTALRHGASNVTCAYRRDEANMPGSKKEVKNAREEGANFEFNVQPVALELNEQGHVCGIRFLRTRLGEPDAQGRRRPVPVEGSEFVMPADAVIMAFGFNPHGMPWLESHGVTVDKWGRIIADVESQYRYQTTNPKIFAGGDAVRGADLVVTAMAEGRHAAQGIIDWLGVKSVKSH.

4Fe-4S ferredoxin-type domains follow at residues 3–22, 47–77, 78–107, 114–147, and 218–252; these read RFIM…EIAC, HQQQ…SHVD, DSIQ…IVLT, VKAT…LVTD, and DQAQ…WIEL. Residues Cys12, Cys15, Cys18, Cys22, Cys56, Cys59, Cys64, Cys68, Cys87, Cys90, Cys93, Cys97, Cys121, Cys124, Cys133, Cys137, Cys227, Cys230, Cys236, and Cys240 each contribute to the [4Fe-4S] cluster site.

[4Fe-4S] cluster is required as a cofactor.

Involved in formate-dependent uric acid degradation under microaerobic and anaerobic conditions. May reduce the enzymes necessary for uric acid degradation. The sequence is that of Putative oxidoreductase AegA from Escherichia coli (strain K12).